Consider the following 92-residue polypeptide: Small ribosomal subunit protein bS18c (92 aa).

This sequence belongs to the bacterial ribosomal protein bS18 family. Part of the 30S ribosomal subunit.

It is found in the plastid. This Epifagus virginiana (Beechdrops) protein is Small ribosomal subunit protein bS18c (rps18).